Consider the following 100-residue polypeptide: uncharacterized protein (100 aa).

The disordered stretch occupies residues 42-84 (PGEPWRTAGGIGEGGAGGDGAAAGGEGDVHGRPAGAEDGEDGA). The segment covering 50-67 (GGIGEGGAGGDGAAAGGE) has biased composition (gly residues).

This is an uncharacterized protein from Torque teno tamarin virus (isolate So-TTV2).